Reading from the N-terminus, the 299-residue chain is Acetylglutamate kinase (299 aa).

Residues 72 to 73 (GG), Arg-94, and Asn-196 each bind substrate.

It belongs to the acetylglutamate kinase family. ArgB subfamily.

It is found in the cytoplasm. The enzyme catalyses N-acetyl-L-glutamate + ATP = N-acetyl-L-glutamyl 5-phosphate + ADP. It participates in amino-acid biosynthesis; L-arginine biosynthesis; N(2)-acetyl-L-ornithine from L-glutamate: step 2/4. Functionally, catalyzes the ATP-dependent phosphorylation of N-acetyl-L-glutamate. This Burkholderia vietnamiensis (strain G4 / LMG 22486) (Burkholderia cepacia (strain R1808)) protein is Acetylglutamate kinase.